The primary structure comprises 312 residues: MELEFLGTGAGVPARQRNVTSIALKLLDERNEVWLFDVGEATQHQILKTTLKPRKVKKIFLTHLHGDHLFGLPGFLSSRSFQGGDEPLTIYGPKGTEEYVRTSLKLSESHLTYALKFVVLPENGVIIDDKTFRVECAKLDHRIASYGFRIVEKDHPGELQVEKLQADGVPSGPVYARIKNGETVTLSDGREIDGRNYIGNAQKGRIVTIIGDTRNCEAITRLAENADVLVHESTFGKQEQKIARQYYHSTNINAAKVAKTAHVKRLLLTHISARYLGQAVRELQNDARDIFKNTRVVSDLDLYDIPFHGRKE.

Positions 63, 65, 67, 68, 141, 212, and 270 each coordinate Zn(2+). Aspartate 67 acts as the Proton acceptor in catalysis.

It belongs to the RNase Z family. In terms of assembly, homodimer. It depends on Zn(2+) as a cofactor.

It carries out the reaction Endonucleolytic cleavage of RNA, removing extra 3' nucleotides from tRNA precursor, generating 3' termini of tRNAs. A 3'-hydroxy group is left at the tRNA terminus and a 5'-phosphoryl group is left at the trailer molecule.. In terms of biological role, zinc phosphodiesterase, which displays some tRNA 3'-processing endonuclease activity. Probably involved in tRNA maturation, by removing a 3'-trailer from precursor tRNA. This chain is Ribonuclease Z, found in Latilactobacillus sakei subsp. sakei (strain 23K) (Lactobacillus sakei subsp. sakei).